A 491-amino-acid polypeptide reads, in one-letter code: Protein nucleotidyltransferase YdiU (491 aa).

ATP contacts are provided by Gly94, Gly96, Arg97, Lys117, Asp129, Gly130, Arg180, and Arg187. Catalysis depends on Asp256, which acts as the Proton acceptor. Asn257 and Asp266 together coordinate Mg(2+). Asp266 is a binding site for ATP.

The protein belongs to the SELO family. It depends on Mg(2+) as a cofactor. Mn(2+) is required as a cofactor.

It catalyses the reaction L-seryl-[protein] + ATP = 3-O-(5'-adenylyl)-L-seryl-[protein] + diphosphate. The enzyme catalyses L-threonyl-[protein] + ATP = 3-O-(5'-adenylyl)-L-threonyl-[protein] + diphosphate. The catalysed reaction is L-tyrosyl-[protein] + ATP = O-(5'-adenylyl)-L-tyrosyl-[protein] + diphosphate. It carries out the reaction L-histidyl-[protein] + UTP = N(tele)-(5'-uridylyl)-L-histidyl-[protein] + diphosphate. It catalyses the reaction L-seryl-[protein] + UTP = O-(5'-uridylyl)-L-seryl-[protein] + diphosphate. The enzyme catalyses L-tyrosyl-[protein] + UTP = O-(5'-uridylyl)-L-tyrosyl-[protein] + diphosphate. In terms of biological role, nucleotidyltransferase involved in the post-translational modification of proteins. It can catalyze the addition of adenosine monophosphate (AMP) or uridine monophosphate (UMP) to a protein, resulting in modifications known as AMPylation and UMPylation. This is Protein nucleotidyltransferase YdiU from Clostridium botulinum (strain Eklund 17B / Type B).